Reading from the N-terminus, the 258-residue chain is Axonemal dynein light intermediate polypeptide 1 (258 aa).

2 disordered regions span residues 1 to 60 (MIPP…CVPD) and 202 to 231 (DLER…EEKK). Residues 176 to 255 (MRKALQAEQG…LKAQLEGIIA (80 aa)) are a coiled coil.

The protein belongs to the inner dynein arm light chain family. In terms of assembly, interacts with CFAP45. Interacts with DYNC1H1. Predominantly expressed in the testis, also detected at lower levels in several tissues expressing cilia. Strongly expressed in elongating spermatid cells (at protein level).

Its subcellular location is the cell projection. The protein resides in the cilium. It is found in the flagellum. The protein localises to the dynein axonemal particle. It localises to the cytoplasm. In terms of biological role, involved in sperm flagellum assembly. In Mus musculus (Mouse), this protein is Axonemal dynein light intermediate polypeptide 1.